We begin with the raw amino-acid sequence, 341 residues long: tRNA N6-adenosine threonylcarbamoyltransferase (341 aa).

Fe cation is bound by residues His-113 and His-117. Residues 136–140 (IISGG), Asp-169, Gly-182, and Asn-280 each bind substrate. A Fe cation-binding site is contributed by Asp-308.

This sequence belongs to the KAE1 / TsaD family. Fe(2+) is required as a cofactor.

Its subcellular location is the cytoplasm. The catalysed reaction is L-threonylcarbamoyladenylate + adenosine(37) in tRNA = N(6)-L-threonylcarbamoyladenosine(37) in tRNA + AMP + H(+). Its function is as follows. Required for the formation of a threonylcarbamoyl group on adenosine at position 37 (t(6)A37) in tRNAs that read codons beginning with adenine. Is involved in the transfer of the threonylcarbamoyl moiety of threonylcarbamoyl-AMP (TC-AMP) to the N6 group of A37, together with TsaE and TsaB. TsaD likely plays a direct catalytic role in this reaction. The sequence is that of tRNA N6-adenosine threonylcarbamoyltransferase from Anaplasma marginale (strain St. Maries).